The sequence spans 199 residues: Dephospho-CoA kinase (199 aa).

One can recognise a DPCK domain in the interval 3–199 (TLGVTGGIGS…ELYWAVTGGQ (197 aa)). 11–16 (GSGKTT) contacts ATP.

Belongs to the CoaE family.

It localises to the cytoplasm. The enzyme catalyses 3'-dephospho-CoA + ATP = ADP + CoA + H(+). It participates in cofactor biosynthesis; coenzyme A biosynthesis; CoA from (R)-pantothenate: step 5/5. Catalyzes the phosphorylation of the 3'-hydroxyl group of dephosphocoenzyme A to form coenzyme A. This is Dephospho-CoA kinase from Salinibacter ruber (strain DSM 13855 / M31).